We begin with the raw amino-acid sequence, 295 residues long: Adrenocorticotropic hormone receptor (295 aa).

The Extracellular portion of the chain corresponds to 1–23 (MRHILNLYENINSTARNNSDCPA). 2 N-linked (GlcNAc...) asparagine glycosylation sites follow: Asn12 and Asn17. Disulfide bonds link Cys21-Cys253 and Cys245-Cys251. A helical transmembrane segment spans residues 24-49 (VILPEEIFFTVSIVGVLENLMVLLAV). Topologically, residues 50 to 58 (AKNKSLQSP) are cytoplasmic. A helical transmembrane segment spans residues 59–79 (MYFFICSLAISDMLGSLYKIL). The Extracellular portion of the chain corresponds to 80 to 104 (ENVLIMFRNMGYLEPRGSFESTADD). A helical membrane pass occupies residues 105–126 (VVDSLFILSLLGSICSLSVIAA). Over 127-147 (DRYITIFHALQYHSIVTMHRA) the chain is Cytoplasmic. Residues 148 to 168 (LVVLTVLWAGCTGSGITIVTF) form a helical membrane-spanning segment. Over 169–180 (SHHVPTVIAFTA) the chain is Extracellular. A helical membrane pass occupies residues 181 to 199 (LFPLMLAFILCLYVHMFLL). Over 200 to 217 (ARSHARRTSSLPKANMRG) the chain is Cytoplasmic. Residues 218–244 (AITLTVLLGVFIFCWAPFVLHVLLMTF) traverse the membrane as a helical segment. The Extracellular segment spans residues 245 to 256 (CPADPYCACYMS). A helical membrane pass occupies residues 257–278 (LFQVNGVLIMCNAVIDPFIYAF). The Cytoplasmic portion of the chain corresponds to 279–295 (RSPELRVAFKKMVICNW). Cys293 is lipidated: S-palmitoyl cysteine.

It belongs to the G-protein coupled receptor 1 family. As to quaternary structure, homodimer. Interacts with corticotropin (ACTH). Interacts with MRAP; this interaction targets MC2R to the plasma membrane. Interacts with MRAP2; competing with MRAP for binding to MC2R and impairing the binding of corticotropin (ACTH). Post-translationally, ubiquitinated by MGRN1 that may be involved in post-endocytic trafficking and/or degradation of internalized receptor.

Its subcellular location is the cell membrane. Hormone receptor primarily expressed in adrenal cortex that plays a key role in regulating adrenocortical function. Upon corticotropin (ACTH) binding, facilitates the release of adrenal glucocorticoids, including cortisol and corticosterone. In addition, MC2R is required for fetal and neonatal adrenal gland development. Mechanistically, activates adenylate cyclase (cAMP), the MAPK cascade as well as the cAMP-dependent protein kinase A pathway leading to steroidogenic factor 1/NR5A1-mediated transcriptional activation. This chain is Adrenocorticotropic hormone receptor (MC2R), found in Ovis aries (Sheep).